Consider the following 238-residue polypeptide: Purine nucleoside phosphorylase DeoD-type (238 aa).

Residue His4 coordinates a purine D-ribonucleoside. Phosphate contacts are provided by residues Gly20, Arg24, Arg43, and 87–90; that span reads RVGS. A purine D-ribonucleoside is bound by residues 179–181 and 203–204; these read EME and SD. Residue Asp204 is the Proton donor of the active site.

The protein belongs to the PNP/UDP phosphorylase family. As to quaternary structure, homohexamer; trimer of homodimers.

It carries out the reaction a purine D-ribonucleoside + phosphate = a purine nucleobase + alpha-D-ribose 1-phosphate. The catalysed reaction is a purine 2'-deoxy-D-ribonucleoside + phosphate = a purine nucleobase + 2-deoxy-alpha-D-ribose 1-phosphate. Catalyzes the reversible phosphorolytic breakdown of the N-glycosidic bond in the beta-(deoxy)ribonucleoside molecules, with the formation of the corresponding free purine bases and pentose-1-phosphate. In Mannheimia succiniciproducens (strain KCTC 0769BP / MBEL55E), this protein is Purine nucleoside phosphorylase DeoD-type.